Here is a 170-residue protein sequence, read N- to C-terminus: Shikimate kinase (170 aa).

Residue 11–16 coordinates ATP; sequence LSGKST. Serine 15 serves as a coordination point for Mg(2+). Substrate contacts are provided by aspartate 33, arginine 57, and glycine 79. Arginine 119 contacts ATP. Arginine 137 is a substrate binding site.

This sequence belongs to the shikimate kinase family. In terms of assembly, monomer. Mg(2+) serves as cofactor.

The protein resides in the cytoplasm. It carries out the reaction shikimate + ATP = 3-phosphoshikimate + ADP + H(+). It functions in the pathway metabolic intermediate biosynthesis; chorismate biosynthesis; chorismate from D-erythrose 4-phosphate and phosphoenolpyruvate: step 5/7. In terms of biological role, catalyzes the specific phosphorylation of the 3-hydroxyl group of shikimic acid using ATP as a cosubstrate. The protein is Shikimate kinase of Clostridium botulinum (strain ATCC 19397 / Type A).